A 353-amino-acid polypeptide reads, in one-letter code: Photosystem II protein D1 (353 aa).

N-acetylthreonine is present on threonine 2. Residue threonine 2 is modified to Phosphothreonine. The next 3 helical transmembrane spans lie at 29–46 (YIGW…TATS), 118–133 (HFLL…EWEL), and 142–156 (WIAV…AATA). Histidine 118 is a chlorophyll a binding site. Position 126 (tyrosine 126) interacts with pheophytin a. Positions 170 and 189 each coordinate [CaMn4O5] cluster. The helical transmembrane segment at 197 to 218 (FHMLGVAGVFGGSLFSAMHGSL) threads the bilayer. Residue histidine 198 coordinates chlorophyll a. A quinone contacts are provided by residues histidine 215 and 264 to 265 (SF). Residue histidine 215 participates in Fe cation binding. Histidine 272 is a binding site for Fe cation. A helical transmembrane segment spans residues 274-288 (FLAAWPVVGIWFTAL). Residues histidine 332, glutamate 333, aspartate 342, and alanine 344 each contribute to the [CaMn4O5] cluster site. Positions 345-353 (SVEAPSTNG) are excised as a propeptide.

Belongs to the reaction center PufL/M/PsbA/D family. As to quaternary structure, PSII is composed of 1 copy each of membrane proteins PsbA, PsbB, PsbC, PsbD, PsbE, PsbF, PsbH, PsbI, PsbJ, PsbK, PsbL, PsbM, PsbT, PsbX, PsbY, PsbZ, Psb30/Ycf12, at least 3 peripheral proteins of the oxygen-evolving complex and a large number of cofactors. It forms dimeric complexes. The D1/D2 heterodimer binds P680, chlorophylls that are the primary electron donor of PSII, and subsequent electron acceptors. It shares a non-heme iron and each subunit binds pheophytin, quinone, additional chlorophylls, carotenoids and lipids. D1 provides most of the ligands for the Mn4-Ca-O5 cluster of the oxygen-evolving complex (OEC). There is also a Cl(-1) ion associated with D1 and D2, which is required for oxygen evolution. The PSII complex binds additional chlorophylls, carotenoids and specific lipids. serves as cofactor. Post-translationally, tyr-161 forms a radical intermediate that is referred to as redox-active TyrZ, YZ or Y-Z. In terms of processing, C-terminally processed by CTPA; processing is essential to allow assembly of the oxygen-evolving complex and thus photosynthetic growth.

The protein localises to the plastid. It localises to the chloroplast thylakoid membrane. The catalysed reaction is 2 a plastoquinone + 4 hnu + 2 H2O = 2 a plastoquinol + O2. Its function is as follows. Photosystem II (PSII) is a light-driven water:plastoquinone oxidoreductase that uses light energy to abstract electrons from H(2)O, generating O(2) and a proton gradient subsequently used for ATP formation. It consists of a core antenna complex that captures photons, and an electron transfer chain that converts photonic excitation into a charge separation. The D1/D2 (PsbA/PsbD) reaction center heterodimer binds P680, the primary electron donor of PSII as well as several subsequent electron acceptors. This chain is Photosystem II protein D1, found in Acorus calamus (Sweet flag).